We begin with the raw amino-acid sequence, 93 residues long: Small ribosomal subunit protein uS17 (93 aa).

This sequence belongs to the universal ribosomal protein uS17 family. In terms of assembly, part of the 30S ribosomal subunit.

Its function is as follows. One of the primary rRNA binding proteins, it binds specifically to the 5'-end of 16S ribosomal RNA. The protein is Small ribosomal subunit protein uS17 of Bordetella avium (strain 197N).